Consider the following 336-residue polypeptide: Ketol-acid reductoisomerase (NADP(+)) (336 aa).

The KARI N-terminal Rossmann domain maps to 1-181 (MNVYYDKDCN…GGGRTGIIET (181 aa)). NADP(+) contacts are provided by residues 24–27 (YGSQ), R47, S50, S52, and 82–85 (DEFQ). The active site involves H107. G133 contacts NADP(+). The 146-residue stretch at 182–327 (TFQDETETDL…GKLRSMMPWI (146 aa)) folds into the KARI C-terminal knotted domain. Mg(2+) is bound by residues D190, E194, E226, and E230. S251 contributes to the substrate binding site.

This sequence belongs to the ketol-acid reductoisomerase family. The cofactor is Mg(2+).

It catalyses the reaction (2R)-2,3-dihydroxy-3-methylbutanoate + NADP(+) = (2S)-2-acetolactate + NADPH + H(+). The catalysed reaction is (2R,3R)-2,3-dihydroxy-3-methylpentanoate + NADP(+) = (S)-2-ethyl-2-hydroxy-3-oxobutanoate + NADPH + H(+). It participates in amino-acid biosynthesis; L-isoleucine biosynthesis; L-isoleucine from 2-oxobutanoate: step 2/4. It functions in the pathway amino-acid biosynthesis; L-valine biosynthesis; L-valine from pyruvate: step 2/4. In terms of biological role, involved in the biosynthesis of branched-chain amino acids (BCAA). Catalyzes an alkyl-migration followed by a ketol-acid reduction of (S)-2-acetolactate (S2AL) to yield (R)-2,3-dihydroxy-isovalerate. In the isomerase reaction, S2AL is rearranged via a Mg-dependent methyl migration to produce 3-hydroxy-3-methyl-2-ketobutyrate (HMKB). In the reductase reaction, this 2-ketoacid undergoes a metal-dependent reduction by NADPH to yield (R)-2,3-dihydroxy-isovalerate. The protein is Ketol-acid reductoisomerase (NADP(+)) of Geotalea daltonii (strain DSM 22248 / JCM 15807 / FRC-32) (Geobacter daltonii).